The sequence spans 78 residues: Acyl carrier protein (78 aa).

The region spanning 2-77 (SDTAERVKKI…DAVKFIDKAS (76 aa)) is the Carrier domain. S37 is subject to O-(pantetheine 4'-phosphoryl)serine.

It belongs to the acyl carrier protein (ACP) family. Post-translationally, 4'-phosphopantetheine is transferred from CoA to a specific serine of apo-ACP by AcpS. This modification is essential for activity because fatty acids are bound in thioester linkage to the sulfhydryl of the prosthetic group.

It is found in the cytoplasm. It functions in the pathway lipid metabolism; fatty acid biosynthesis. Its function is as follows. Carrier of the growing fatty acid chain in fatty acid biosynthesis. The sequence is that of Acyl carrier protein from Brucella abortus (strain S19).